Here is a 210-residue protein sequence, read N- to C-terminus: Shikimate kinase (210 aa).

Position 34 to 39 (34 to 39 (GVGKSV)) interacts with ATP. Mg(2+) is bound at residue Ser-38. Substrate contacts are provided by Asp-56, Arg-80, and Gly-102. Arg-140 is an ATP binding site. Arg-159 lines the substrate pocket.

This sequence belongs to the shikimate kinase family. In terms of assembly, monomer. Mg(2+) serves as cofactor.

It localises to the cytoplasm. It catalyses the reaction shikimate + ATP = 3-phosphoshikimate + ADP + H(+). Its pathway is metabolic intermediate biosynthesis; chorismate biosynthesis; chorismate from D-erythrose 4-phosphate and phosphoenolpyruvate: step 5/7. Its function is as follows. Catalyzes the specific phosphorylation of the 3-hydroxyl group of shikimic acid using ATP as a cosubstrate. This is Shikimate kinase from Bartonella henselae (strain ATCC 49882 / DSM 28221 / CCUG 30454 / Houston 1) (Rochalimaea henselae).